Reading from the N-terminus, the 550-residue chain is Putative pentatricopeptide repeat-containing protein At5g37570 (550 aa).

12 PPR repeats span residues 73-107, 109-143, 144-174, 175-205, 206-240, 241-267, 268-302, 303-333, 339-369, 370-404, 405-435, and 441-475; these read GTYL…GLAR, DEYT…GFDK, DVVV…MPER, NAVS…MPER, NLGS…DIIS, YTSM…ARGV, DVRA…NVKP, DEFI…LHQR, SHYV…MPQR, DLVS…GIVP, DEVA…MRKK, and SPDH…AHAS. The tract at residues 476–550 is type E motif; that stretch reads AWGSLLGGCS…KICGRSWISR (75 aa).

This sequence belongs to the PPR family. PCMP-E subfamily.

The chain is Putative pentatricopeptide repeat-containing protein At5g37570 (PCMP-E37) from Arabidopsis thaliana (Mouse-ear cress).